Reading from the N-terminus, the 187-residue chain is Cytokinin riboside 5'-monophosphate phosphoribohydrolase (187 aa).

Residues Glu-80, 98-99 (RK), 115-121 (GVGTLDE), and Thr-127 each bind substrate.

The protein belongs to the LOG family.

It catalyses the reaction N(6)-(dimethylallyl)adenosine 5'-phosphate + H2O = N(6)-dimethylallyladenine + D-ribose 5-phosphate. It carries out the reaction 9-ribosyl-trans-zeatin 5'-phosphate + H2O = trans-zeatin + D-ribose 5-phosphate. Functionally, catalyzes the hydrolytic removal of ribose 5'-monophosphate from nitrogen N6-modified adenosines, the final step of bioactive cytokinin synthesis. The sequence is that of Cytokinin riboside 5'-monophosphate phosphoribohydrolase from Mycobacterium marinum (strain ATCC BAA-535 / M).